The chain runs to 307 residues: Transaldolase (307 aa).

Lys-125 functions as the Schiff-base intermediate with substrate in the catalytic mechanism.

It belongs to the transaldolase family. Type 1 subfamily. As to quaternary structure, homodimer.

The protein localises to the cytoplasm. It catalyses the reaction D-sedoheptulose 7-phosphate + D-glyceraldehyde 3-phosphate = D-erythrose 4-phosphate + beta-D-fructose 6-phosphate. It participates in carbohydrate degradation; pentose phosphate pathway; D-glyceraldehyde 3-phosphate and beta-D-fructose 6-phosphate from D-ribose 5-phosphate and D-xylulose 5-phosphate (non-oxidative stage): step 2/3. Its function is as follows. Transaldolase is important for the balance of metabolites in the pentose-phosphate pathway. This is Transaldolase from Pseudomonas aeruginosa (strain LESB58).